The sequence spans 383 residues: N-acetyldiaminopimelate deacetylase (383 aa).

Residue aspartate 72 is part of the active site. Glutamate 131 acts as the Proton acceptor in catalysis.

This sequence belongs to the peptidase M20A family. N-acetyldiaminopimelate deacetylase subfamily.

It catalyses the reaction N-acetyl-(2S,6S)-2,6-diaminopimelate + H2O = (2S,6S)-2,6-diaminopimelate + acetate. Its pathway is amino-acid biosynthesis; L-lysine biosynthesis via DAP pathway; LL-2,6-diaminopimelate from (S)-tetrahydrodipicolinate (acetylase route): step 3/3. In terms of biological role, catalyzes the conversion of N-acetyl-diaminopimelate to diaminopimelate and acetate. The protein is N-acetyldiaminopimelate deacetylase of Lacticaseibacillus paracasei (strain ATCC 334 / BCRC 17002 / CCUG 31169 / CIP 107868 / KCTC 3260 / NRRL B-441) (Lactobacillus paracasei).